The sequence spans 237 residues: Phosphoribosylaminoimidazole-succinocarboxamide synthase (237 aa).

The protein belongs to the SAICAR synthetase family.

It catalyses the reaction 5-amino-1-(5-phospho-D-ribosyl)imidazole-4-carboxylate + L-aspartate + ATP = (2S)-2-[5-amino-1-(5-phospho-beta-D-ribosyl)imidazole-4-carboxamido]succinate + ADP + phosphate + 2 H(+). It functions in the pathway purine metabolism; IMP biosynthesis via de novo pathway; 5-amino-1-(5-phospho-D-ribosyl)imidazole-4-carboxamide from 5-amino-1-(5-phospho-D-ribosyl)imidazole-4-carboxylate: step 1/2. The polypeptide is Phosphoribosylaminoimidazole-succinocarboxamide synthase (Halalkalibacterium halodurans (strain ATCC BAA-125 / DSM 18197 / FERM 7344 / JCM 9153 / C-125) (Bacillus halodurans)).